A 642-amino-acid polypeptide reads, in one-letter code: Myrosinase-binding protein 2 (642 aa).

Jacalin-type lectin domains are found at residues 2 to 151 (SEKV…HFFA), 156 to 291 (LKHF…HFAP), 334 to 477 (PNKV…YFAP), and 490 to 633 (SKKL…HAVP). Over residues 296–334 (TPAPAPAPAPAPAPAPSPAPASAPVPAPAPTPAPAPAPP) the composition is skewed to pro residues. Disordered regions lie at residues 296 to 338 (TPAP…NKVE) and 479 to 499 (TNST…RGGN). Positions 479 to 490 (TNSTTPSTPSTS) are enriched in low complexity.

It belongs to the jacalin lectin family. In terms of tissue distribution, expressed in flowers. Detected mainly in ovules and styles of immature flowers, but also in pistils, styles, stamens, petals and embryos. Not detected in leaves.

In Arabidopsis thaliana (Mouse-ear cress), this protein is Myrosinase-binding protein 2 (F-ATMBP).